Here is a 354-residue protein sequence, read N- to C-terminus: Guanine nucleotide-binding protein G(o) subunit alpha (354 aa).

A lipid anchor (N-myristoyl glycine) is attached at G2. C3 carries the S-palmitoyl cysteine lipid modification. One can recognise a G-alpha domain in the interval K32–Y354. The interval K35–T48 is G1 motif. GTP contacts are provided by residues G40–S47, L176–T182, D201–Q205, N270–D273, and A326. Residues S47 and T182 each coordinate Mg(2+). Residues D174–T182 are G2 motif. Residues F197 to R206 form a G3 motif region. Residues I266–D273 are G4 motif. The tract at residues T324–T329 is G5 motif.

It belongs to the G-alpha family. G(i/o/t/z) subfamily. G proteins are composed of 3 units; alpha, beta and gamma. The alpha chain contains the guanine nucleotide binding site.

Guanine nucleotide-binding proteins (G proteins) are involved as modulators or transducers in various transmembrane signaling systems. The G(o) protein function is not clear. The polypeptide is Guanine nucleotide-binding protein G(o) subunit alpha (Lymnaea stagnalis (Great pond snail)).